Consider the following 255-residue polypeptide: NAP1-related protein 2 (255 aa).

Residues 19-60 adopt a coiled-coil conformation; the sequence is IDAELVLSIEKLQEIQDDLEKINEKASDEVLEVEQKYNVIRK. A disordered region spans residues 213–255; it reads NPLTYFNNDADEEDFDGDDDGDEEEKEGDSDEDDDEEDEVGEE. Over residues 221-255 the composition is skewed to acidic residues; that stretch reads DADEEDFDGDDDGDEEEKEGDSDEDDDEEDEVGEE.

It belongs to the nucleosome assembly protein (NAP) family. In terms of assembly, can form homomeric and heteromeric protein complexes with NRP1. Binds histones H2A and H2B and associates with chromatin in vivo. As to expression, ubiquitous.

The protein resides in the cytoplasm. The protein localises to the nucleus. Functionally, acts as a histone H2A/H2B chaperone in nucleosome assembly, playing a critical role for the correct expression of genes involved in root proliferation and patterning. Required with NRP1 for the maintenance of cell proliferation and differentiation in postembryonic root growth. Involved in both intramolecular and intermolecular somatic homologous recombination. The polypeptide is NAP1-related protein 2 (NRP2) (Arabidopsis thaliana (Mouse-ear cress)).